A 335-amino-acid polypeptide reads, in one-letter code: Spliceosome-associated protein 49 (335 aa).

RRM domains lie at 13-84 (IYLG…PIRV) and 101-172 (LFVG…PITV). Residues 204–223 (VTPQSTLPPGFSPATPAPTS) are disordered.

The protein belongs to the SF3B4 family.

The protein localises to the nucleus. The chain is Spliceosome-associated protein 49 (sap49) from Schizosaccharomyces pombe (strain 972 / ATCC 24843) (Fission yeast).